Consider the following 124-residue polypeptide: Mediator of RNA polymerase II transcription subunit 31 (124 aa).

It belongs to the Mediator complex subunit 31 family. In terms of assembly, component of the Mediator complex.

The protein resides in the nucleus. Functionally, component of the Mediator complex, a coactivator involved in the regulated transcription of nearly all RNA polymerase II-dependent genes. Mediator functions as a bridge to convey information from gene-specific regulatory proteins to the basal RNA polymerase II transcription machinery. Mediator is recruited to promoters by direct interactions with regulatory proteins and serves as a scaffold for the assembly of a functional preinitiation complex with RNA polymerase II and the general transcription factors. This chain is Mediator of RNA polymerase II transcription subunit 31 (SOH1), found in Kluyveromyces lactis (strain ATCC 8585 / CBS 2359 / DSM 70799 / NBRC 1267 / NRRL Y-1140 / WM37) (Yeast).